The primary structure comprises 104 residues: Increased recombination centers protein 13 (104 aa).

A helical transmembrane segment spans residues 63 to 83 (LVHLFSYVFFLFLLKICVDVL).

The protein resides in the membrane. May be involved in a pathway contributing to genomic integrity. This Saccharomyces cerevisiae (strain ATCC 204508 / S288c) (Baker's yeast) protein is Increased recombination centers protein 13 (IRC13).